Here is a 213-residue protein sequence, read N- to C-terminus: Ras-related protein Rab-4B (213 aa).

A2 is subject to N-acetylalanine. Positions 18, 19, 20, 21, 22, and 23 each coordinate GDP. GTP is bound by residues G18, T19, G20, K21, S22, C23, S37, H39, and T40. S22 serves as a coordination point for Mg(2+). The Switch 1 signature appears at 39–44; that stretch reads HTIGVE. T40 and D63 together coordinate Mg(2+). The Switch 2 motif lies at 65-74; it reads AGQERFRSVT. Residue G66 coordinates GTP. Residue Q67 is modified to 5-glutamyl serotonin. 5 residues coordinate GDP: N121, K122, D124, A152, and L153. N121, K122, D124, A152, and L153 together coordinate GTP. S185 and S193 each carry phosphoserine. 2 S-geranylgeranyl cysteine lipidation sites follow: C211 and C213. Residue C213 is modified to Cysteine methyl ester.

The protein belongs to the small GTPase superfamily. Rab family. Interacts (GTP-bound form) with RUFY1; the interaction allows endosomal tethering and fusion. The cofactor is Mg(2+). Serotonylation of Gln-67 by TGM2 during activation and aggregation of platelets leads to constitutive activation of GTPase activity.

The protein localises to the cell membrane. It is found in the early endosome membrane. The catalysed reaction is GTP + H2O = GDP + phosphate + H(+). Its activity is regulated as follows. Regulated by guanine nucleotide exchange factors (GEFs) which promote the exchange of bound GDP for free GTP. Regulated by GTPase activating proteins (GAPs) which increase the GTP hydrolysis activity. Inhibited by GDP dissociation inhibitors (GDIs). Its function is as follows. The small GTPases Rab are key regulators of intracellular membrane trafficking, from the formation of transport vesicles to their fusion with membranes. Rabs cycle between an inactive GDP-bound form and an active GTP-bound form that is able to recruit to membranes different set of downstream effectors directly responsible for vesicle formation, movement, tethering and fusion. RAB4B mediates endosomal tethering and fusion through the interaction with RUFY1 and RAB14. Acts as a regulator of platelet alpha-granule release during activation and aggregation of platelets. In Mus musculus (Mouse), this protein is Ras-related protein Rab-4B.